The following is a 133-amino-acid chain: Glycine cleavage system H protein (133 aa).

The region spanning 24 to 106 (IATIGISAYA…YGDGWLLKVR (83 aa)) is the Lipoyl-binding domain. Lysine 65 carries the N6-lipoyllysine modification.

It belongs to the GcvH family. In terms of assembly, the glycine cleavage system is composed of four proteins: P, T, L and H. The cofactor is (R)-lipoate.

In terms of biological role, the glycine cleavage system catalyzes the degradation of glycine. The H protein shuttles the methylamine group of glycine from the P protein to the T protein. The polypeptide is Glycine cleavage system H protein (Crocosphaera subtropica (strain ATCC 51142 / BH68) (Cyanothece sp. (strain ATCC 51142))).